The sequence spans 337 residues: Lipoyl synthase (337 aa).

Positions 81, 86, 92, 107, 111, 114, and 323 each coordinate [4Fe-4S] cluster. Positions 93 to 312 (FSHGTATFMI…EDYGNALGFS (220 aa)) constitute a Radical SAM core domain.

Belongs to the radical SAM superfamily. Lipoyl synthase family. The cofactor is [4Fe-4S] cluster.

Its subcellular location is the cytoplasm. The enzyme catalyses [[Fe-S] cluster scaffold protein carrying a second [4Fe-4S](2+) cluster] + N(6)-octanoyl-L-lysyl-[protein] + 2 oxidized [2Fe-2S]-[ferredoxin] + 2 S-adenosyl-L-methionine + 4 H(+) = [[Fe-S] cluster scaffold protein] + N(6)-[(R)-dihydrolipoyl]-L-lysyl-[protein] + 4 Fe(3+) + 2 hydrogen sulfide + 2 5'-deoxyadenosine + 2 L-methionine + 2 reduced [2Fe-2S]-[ferredoxin]. The protein operates within protein modification; protein lipoylation via endogenous pathway; protein N(6)-(lipoyl)lysine from octanoyl-[acyl-carrier-protein]: step 2/2. Its function is as follows. Catalyzes the radical-mediated insertion of two sulfur atoms into the C-6 and C-8 positions of the octanoyl moiety bound to the lipoyl domains of lipoate-dependent enzymes, thereby converting the octanoylated domains into lipoylated derivatives. The sequence is that of Lipoyl synthase from Xanthomonas euvesicatoria pv. vesicatoria (strain 85-10) (Xanthomonas campestris pv. vesicatoria).